The primary structure comprises 544 residues: Phosphoacetylglucosamine mutase (544 aa).

Residue Ser66 is the Phosphoserine intermediate of the active site. The Mg(2+) site is built by Ser66, Asp290, Asp292, and Asp294. Substrate is bound by residues 387-389 (EAN), 512-516 (RASGT), and Arg521.

It belongs to the phosphohexose mutase family. Mg(2+) is required as a cofactor.

The enzyme catalyses N-acetyl-alpha-D-glucosamine 1-phosphate = N-acetyl-D-glucosamine 6-phosphate. Its pathway is nucleotide-sugar biosynthesis; UDP-N-acetyl-alpha-D-glucosamine biosynthesis; N-acetyl-alpha-D-glucosamine 1-phosphate from alpha-D-glucosamine 6-phosphate (route I): step 2/2. Its function is as follows. Catalyzes the conversion of GlcNAc-6-P into GlcNAc-1-P during the synthesis of uridine diphosphate/UDP-GlcNAc, which is a biosynthetic precursor of chitin and also supplies the amino sugars for N-linked oligosaccharides of glycoproteins. This Candida albicans (Yeast) protein is Phosphoacetylglucosamine mutase.